Here is a 98-residue protein sequence, read N- to C-terminus: Phosphoribosyl-ATP pyrophosphatase (98 aa).

It belongs to the PRA-PH family.

The protein resides in the cytoplasm. The enzyme catalyses 1-(5-phospho-beta-D-ribosyl)-ATP + H2O = 1-(5-phospho-beta-D-ribosyl)-5'-AMP + diphosphate + H(+). Its pathway is amino-acid biosynthesis; L-histidine biosynthesis; L-histidine from 5-phospho-alpha-D-ribose 1-diphosphate: step 2/9. The sequence is that of Phosphoribosyl-ATP pyrophosphatase from Pelotomaculum thermopropionicum (strain DSM 13744 / JCM 10971 / SI).